We begin with the raw amino-acid sequence, 91 residues long: UPF0358 protein SSP1677 (91 aa).

This sequence belongs to the UPF0358 family.

The polypeptide is UPF0358 protein SSP1677 (Staphylococcus saprophyticus subsp. saprophyticus (strain ATCC 15305 / DSM 20229 / NCIMB 8711 / NCTC 7292 / S-41)).